We begin with the raw amino-acid sequence, 1207 residues long: Disease resistance protein RPP2B (1207 aa).

Positions 15-180 (CEFDVFVSFR…EIVKNTFRML (166 aa)) constitute a TIR domain. The active site involves glutamate 89. The NB-ARC domain maps to 201–445 (ELEKLLMFDN…FLDIACFFRS (245 aa)). LRR repeat units lie at residues 607–630 (PKEL…EKNT), 653–676 (AKNL…VKQM), 677–699 (NELI…GFKI), 720–743 (SESI…IESL), 744–767 (HSLI…LYKL), 769–791 (SLQE…KEKM), 792–815 (ECLE…CLSN), 840–862 (NSFL…KFSS), and 863–886 (LRSL…IEKL).

This sequence belongs to the disease resistance TIR-NB-LRR family.

The enzyme catalyses NAD(+) + H2O = ADP-D-ribose + nicotinamide + H(+). Functionally, disease resistance protein that cooperates with RPP2A to confer resistance to Hyaloperonospora parasitica isolate Cala2. The polypeptide is Disease resistance protein RPP2B (Arabidopsis thaliana (Mouse-ear cress)).